Reading from the N-terminus, the 466-residue chain is Soluble pyridine nucleotide transhydrogenase (466 aa).

Position 36–45 (36–45) interacts with FAD; sequence ERYNNVGGGC.

This sequence belongs to the class-I pyridine nucleotide-disulfide oxidoreductase family. FAD is required as a cofactor.

The protein localises to the cytoplasm. It carries out the reaction NAD(+) + NADPH = NADH + NADP(+). Its function is as follows. Conversion of NADPH, generated by peripheral catabolic pathways, to NADH, which can enter the respiratory chain for energy generation. This is Soluble pyridine nucleotide transhydrogenase from Yersinia pseudotuberculosis serotype O:1b (strain IP 31758).